The following is a 271-amino-acid chain: Formamidopyrimidine-DNA glycosylase (271 aa).

The active-site Schiff-base intermediate with DNA is the Pro-2. The active-site Proton donor is Glu-3. Lys-57 (proton donor; for beta-elimination activity) is an active-site residue. 3 residues coordinate DNA: His-90, Arg-109, and Lys-151. Residues 236–270 (HVYGRGGETCTQCGNLLSEIRLGQRTTVFCSICQP) form an FPG-type zinc finger. Residue Arg-260 is the Proton donor; for delta-elimination activity of the active site.

Belongs to the FPG family. As to quaternary structure, monomer. Zn(2+) serves as cofactor.

It carries out the reaction Hydrolysis of DNA containing ring-opened 7-methylguanine residues, releasing 2,6-diamino-4-hydroxy-5-(N-methyl)formamidopyrimidine.. It catalyses the reaction 2'-deoxyribonucleotide-(2'-deoxyribose 5'-phosphate)-2'-deoxyribonucleotide-DNA = a 3'-end 2'-deoxyribonucleotide-(2,3-dehydro-2,3-deoxyribose 5'-phosphate)-DNA + a 5'-end 5'-phospho-2'-deoxyribonucleoside-DNA + H(+). Functionally, involved in base excision repair of DNA damaged by oxidation or by mutagenic agents. Acts as a DNA glycosylase that recognizes and removes damaged bases. Has a preference for oxidized purines, such as 7,8-dihydro-8-oxoguanine (8-oxoG). Has AP (apurinic/apyrimidinic) lyase activity and introduces nicks in the DNA strand. Cleaves the DNA backbone by beta-delta elimination to generate a single-strand break at the site of the removed base with both 3'- and 5'-phosphates. This is Formamidopyrimidine-DNA glycosylase from Shewanella oneidensis (strain ATCC 700550 / JCM 31522 / CIP 106686 / LMG 19005 / NCIMB 14063 / MR-1).